The chain runs to 221 residues: Protein OPG164 (221 aa).

Position 1 (Met1) is a topological domain, extracellular. Residues 2 to 22 form a helical membrane-spanning segment; it reads MLVPLITVTVVAGTILVCYIL. The Cytoplasmic portion of the chain corresponds to 23–221; sequence YICRKKIRTV…DIESSVVSLV (199 aa). A phosphotyrosine; by host mark is found at Tyr112 and Tyr132. 3 short sequence motifs (NPF-motif) span residues 161–163, 176–178, and 190–192; these read NPF.

Belongs to the orthopoxvirus OPG164 protein family. Interacts with host NCK. Interacts with protein OPG161 (via C-terminus). Interacts with protein OPG056. Interacts (via C-terminus) with host kinesin light chain/KLC1. Interacts with host intersectin-1/ITSN1 and EPS15. Phosphorylated on Tyr-112 and Tyr-132. Phosphorylations activate the host ARP2-ARP3 complex and lead to actin nucleation.

Its subcellular location is the host cell membrane. Involved in the intracellular transport and egress of virions to the host cell surface with help of protein OPG056. Also participates in the formation of actin tails at the plasma membrane to allow efficient actin-based motility and thus cell to cell transmission of viral particles. Recruits host intersectin-1/ITSN1 and activates host CDC42 to drive ARP2/3-mediated actin polymerization. In Homo sapiens (Human), this protein is Protein OPG164 (OPG164).